The sequence spans 34 residues: Crassicorin-II (34 aa).

A disulfide bridge links Cys-6 with Cys-30.

As to expression, highly expressed by the mesenteries. Moderately expressed by the pharynx. Weakly expressed by the gonad and pedal disk. No expression in tentacle.

The protein resides in the secreted. It is found in the nematocyst. Functionally, peptide with both antimicrobial and neurotoxin activities. Cationic AMP with antimicrobial activity against both Gram-positive bacteria (B.subtilis) and Gram-negative bacteria (E.coli and S.enterica). Shows no significant antimicrobial activity against bacteria S.aureus and P.aeruginosa, as well as the fungus C.albicans. In vivo, induces reversible paralytic activity towards the shrimp P.paucidens. May act by impairing sodium or potassium channels in the prey. In Urticina crassicornis (Mottled anemone), this protein is Crassicorin-II.